Here is a 437-residue protein sequence, read N- to C-terminus: Aspartic proteinase nepenthesin-1 (437 aa).

The first 24 residues, 1–24, serve as a signal peptide directing secretion; the sequence is MASSLYSFLLALSIVYIFVAPTHS. A propeptide spans 25-78 (activation peptide); sequence TSRTALNHRHEAKVTGFQIMLEHVDSGKNLTKFQLLERAIERGSRRLQRLEAML. N-linked (GlcNAc...) asparagine glycans are attached at residues asparagine 53 and asparagine 98. In terms of domain architecture, Peptidase A1 spans 95-430; the sequence is YLMNLSIGTP…DTGNSVVSFA (336 aa). The active site involves aspartate 113. 6 disulfides stabilise this stretch: cysteine 123–cysteine 126, cysteine 129–cysteine 203, cysteine 150–cysteine 168, cysteine 155–cysteine 163, cysteine 240–cysteine 434, and cysteine 354–cysteine 395. Asparagine 131 is a glycosylation site (N-linked (GlcNAc...) asparagine). Asparagine 198, asparagine 267, and asparagine 307 each carry an N-linked (GlcNAc...) asparagine glycan. The active site involves aspartate 315. Asparagine 345 carries N-linked (GlcNAc...) asparagine glycosylation.

The protein belongs to the peptidase A1 family.

It is found in the secreted. The enzyme catalyses Similar to pepsin, but also cleaves on either side of Asp and at Lys-|-Arg.. With respect to regulation, inhibited by pepstatin and by diazoacetyl-D,L-norleucine methyl ester (DAN) in the presence of Cu(2+) ions. Extracellular proteinase found in the pitcher fluid of carnivorous plants. Digest prey for nitrogen uptake. This chain is Aspartic proteinase nepenthesin-1 (nep1), found in Nepenthes gracilis (Slender pitcher plant).